Here is a 98-residue protein sequence, read N- to C-terminus: NADH-ubiquinone oxidoreductase chain 4L (98 aa).

Transmembrane regions (helical) follow at residues 1–21 (MSLTYMNMFMAFTISLLGLLM), 29–49 (SLLCLEGMMLSLFVMMTITIL), and 61–81 (IILLVFAACEAALGLSLLVMV).

The protein belongs to the complex I subunit 4L family. In terms of assembly, core subunit of respiratory chain NADH dehydrogenase (Complex I) which is composed of 45 different subunits.

It is found in the mitochondrion inner membrane. The enzyme catalyses a ubiquinone + NADH + 5 H(+)(in) = a ubiquinol + NAD(+) + 4 H(+)(out). Functionally, core subunit of the mitochondrial membrane respiratory chain NADH dehydrogenase (Complex I) which catalyzes electron transfer from NADH through the respiratory chain, using ubiquinone as an electron acceptor. Part of the enzyme membrane arm which is embedded in the lipid bilayer and involved in proton translocation. This Artibeus jamaicensis (Jamaican fruit-eating bat) protein is NADH-ubiquinone oxidoreductase chain 4L (MT-ND4L).